A 445-amino-acid chain; its full sequence is Tubulin beta chain (445 aa).

Positions 11, 69, 138, 142, 143, 144, 204, and 226 each coordinate GTP. Glutamate 69 contributes to the Mg(2+) binding site.

This sequence belongs to the tubulin family. In terms of assembly, dimer of alpha and beta chains. A typical microtubule is a hollow water-filled tube with an outer diameter of 25 nm and an inner diameter of 15 nM. Alpha-beta heterodimers associate head-to-tail to form protofilaments running lengthwise along the microtubule wall with the beta-tubulin subunit facing the microtubule plus end conferring a structural polarity. Microtubules usually have 13 protofilaments but different protofilament numbers can be found in some organisms and specialized cells. Requires Mg(2+) as cofactor.

It is found in the cytoplasm. It localises to the cytoskeleton. In terms of biological role, tubulin is the major constituent of microtubules, a cylinder consisting of laterally associated linear protofilaments composed of alpha- and beta-tubulin heterodimers. Microtubules grow by the addition of GTP-tubulin dimers to the microtubule end, where a stabilizing cap forms. Below the cap, tubulin dimers are in GDP-bound state, owing to GTPase activity of alpha-tubulin. The protein is Tubulin beta chain (TUB-2) of Schizophyllum commune (Split gill fungus).